The sequence spans 461 residues: Kynurenine 3-monooxygenase (461 aa).

The next 2 membrane-spanning stretches (helical) occupy residues 395–415 (TIMN…VTFS) and 432–452 (ILSR…AAGI).

This sequence belongs to the aromatic-ring hydroxylase family. KMO subfamily. It depends on FAD as a cofactor.

It is found in the mitochondrion. Its subcellular location is the membrane. It carries out the reaction L-kynurenine + NADPH + O2 + H(+) = 3-hydroxy-L-kynurenine + NADP(+) + H2O. The protein operates within cofactor biosynthesis; NAD(+) biosynthesis; quinolinate from L-kynurenine: step 1/3. Its function is as follows. Catalyzes the hydroxylation of L-kynurenine (L-Kyn) to form 3-hydroxy-L-kynurenine (L-3OHKyn). Required for synthesis of quinolinic acid. This is Kynurenine 3-monooxygenase from Caenorhabditis elegans.